Consider the following 269-residue polypeptide: Leucinostatins biosynthesis cluster protein T (269 aa).

An N-terminal signal peptide occupies residues Met1–Ala15. An N-linked (GlcNAc...) asparagine glycan is attached at Asn254.

Functionally, part of the gene cluster that mediates the biosynthesis of the lipopeptide antibiotics leucinostatins that show extensive biological activities, including antimalarial, antiviral, antibacterial, antifungal, and antitumor activities, as well as phytotoxic. The function of lcsT within the leucinostatins biosynthesis has not been identified yet. In Purpureocillium lilacinum (Paecilomyces lilacinus), this protein is Leucinostatins biosynthesis cluster protein T.